The chain runs to 201 residues: FMN-dependent NADH:quinone oxidoreductase (201 aa).

FMN is bound by residues Ser-10, 16 to 18 (SQS), 96 to 99 (MYNF), and 140 to 143 (SRGG).

The protein belongs to the azoreductase type 1 family. In terms of assembly, homodimer. FMN is required as a cofactor.

The catalysed reaction is 2 a quinone + NADH + H(+) = 2 a 1,4-benzosemiquinone + NAD(+). It catalyses the reaction N,N-dimethyl-1,4-phenylenediamine + anthranilate + 2 NAD(+) = 2-(4-dimethylaminophenyl)diazenylbenzoate + 2 NADH + 2 H(+). Quinone reductase that provides resistance to thiol-specific stress caused by electrophilic quinones. In terms of biological role, also exhibits azoreductase activity. Catalyzes the reductive cleavage of the azo bond in aromatic azo compounds to the corresponding amines. The sequence is that of FMN-dependent NADH:quinone oxidoreductase from Cronobacter sakazakii (strain ATCC BAA-894) (Enterobacter sakazakii).